We begin with the raw amino-acid sequence, 391 residues long: Phosphoglycerate kinase (391 aa).

Residues 21–23 (DLN), Arg36, 59–62 (HLGR), Arg113, and Arg146 contribute to the substrate site. ATP is bound by residues Lys197, Glu319, and 345–348 (GGDT).

It belongs to the phosphoglycerate kinase family. As to quaternary structure, monomer.

Its subcellular location is the cytoplasm. It carries out the reaction (2R)-3-phosphoglycerate + ATP = (2R)-3-phospho-glyceroyl phosphate + ADP. It functions in the pathway carbohydrate degradation; glycolysis; pyruvate from D-glyceraldehyde 3-phosphate: step 2/5. This chain is Phosphoglycerate kinase, found in Shewanella putrefaciens (strain CN-32 / ATCC BAA-453).